A 290-amino-acid polypeptide reads, in one-letter code: Phosphoribosylaminoimidazole-succinocarboxamide synthase (290 aa).

It belongs to the SAICAR synthetase family.

It catalyses the reaction 5-amino-1-(5-phospho-D-ribosyl)imidazole-4-carboxylate + L-aspartate + ATP = (2S)-2-[5-amino-1-(5-phospho-beta-D-ribosyl)imidazole-4-carboxamido]succinate + ADP + phosphate + 2 H(+). Its pathway is purine metabolism; IMP biosynthesis via de novo pathway; 5-amino-1-(5-phospho-D-ribosyl)imidazole-4-carboxamide from 5-amino-1-(5-phospho-D-ribosyl)imidazole-4-carboxylate: step 1/2. In Haemophilus influenzae (strain ATCC 51907 / DSM 11121 / KW20 / Rd), this protein is Phosphoribosylaminoimidazole-succinocarboxamide synthase (purC).